The following is a 324-amino-acid chain: tRNA-cytidine(32) 2-sulfurtransferase (324 aa).

Residues 1-26 (MQDLIDSPTAARTPAEEKIRHEGNKL) form a disordered region. Residues 14–26 (PAEEKIRHEGNKL) are compositionally biased toward basic and acidic residues. The PP-loop motif motif lies at 55–60 (SGGKDS). Residues C130, C133, and C221 each contribute to the [4Fe-4S] cluster site. The disordered stretch occupies residues 278–310 (RPDANGDTAFDPIDPEDPREDAGDACASSPADG).

This sequence belongs to the TtcA family. Homodimer. Mg(2+) serves as cofactor. Requires [4Fe-4S] cluster as cofactor.

Its subcellular location is the cytoplasm. It catalyses the reaction cytidine(32) in tRNA + S-sulfanyl-L-cysteinyl-[cysteine desulfurase] + AH2 + ATP = 2-thiocytidine(32) in tRNA + L-cysteinyl-[cysteine desulfurase] + A + AMP + diphosphate + H(+). It functions in the pathway tRNA modification. Catalyzes the ATP-dependent 2-thiolation of cytidine in position 32 of tRNA, to form 2-thiocytidine (s(2)C32). The sulfur atoms are provided by the cysteine/cysteine desulfurase (IscS) system. In Bordetella petrii (strain ATCC BAA-461 / DSM 12804 / CCUG 43448), this protein is tRNA-cytidine(32) 2-sulfurtransferase.